The sequence spans 156 residues: Phosphopantetheine adenylyltransferase (156 aa).

Substrate is bound at residue T9. ATP-binding positions include 9–10 (TF) and H17. The substrate site is built by K41, L73, and R87. ATP-binding positions include 88–90 (GVR), E98, and 123–129 (WAFVSST).

It belongs to the bacterial CoaD family. As to quaternary structure, homohexamer. It depends on Mg(2+) as a cofactor.

It localises to the cytoplasm. It carries out the reaction (R)-4'-phosphopantetheine + ATP + H(+) = 3'-dephospho-CoA + diphosphate. It participates in cofactor biosynthesis; coenzyme A biosynthesis; CoA from (R)-pantothenate: step 4/5. In terms of biological role, reversibly transfers an adenylyl group from ATP to 4'-phosphopantetheine, yielding dephospho-CoA (dPCoA) and pyrophosphate. This is Phosphopantetheine adenylyltransferase from Haemophilus influenzae (strain 86-028NP).